The following is an 886-amino-acid chain: Valine--tRNA ligase (886 aa).

The short motif at P53–H63 is the 'HIGH' region element. The 'KMSKS' region motif lies at K540 to S544. K543 is an ATP binding site. Residues T819–D851 adopt a coiled-coil conformation.

The protein belongs to the class-I aminoacyl-tRNA synthetase family. ValS type 1 subfamily. In terms of assembly, monomer.

The protein localises to the cytoplasm. The catalysed reaction is tRNA(Val) + L-valine + ATP = L-valyl-tRNA(Val) + AMP + diphosphate. Catalyzes the attachment of valine to tRNA(Val). As ValRS can inadvertently accommodate and process structurally similar amino acids such as threonine, to avoid such errors, it has a 'posttransfer' editing activity that hydrolyzes mischarged Thr-tRNA(Val) in a tRNA-dependent manner. The polypeptide is Valine--tRNA ligase (Mycobacterium tuberculosis (strain CDC 1551 / Oshkosh)).